Consider the following 163-residue polypeptide: uncharacterized protein (163 aa).

Positions 1–54 (MGKSARLRRSQTSSPENVLLGKDSSDDPYRSDSETESNSSSGTESNMSSDSTTS) are disordered. Basic and acidic residues predominate over residues 23-33 (DSSDDPYRSDS). Residues 36-52 (ESNSSSGTESNMSSDST) show a composition bias toward low complexity. The stretch at 69–143 (LRTELAEMEM…VEELESSTRE (75 aa)) forms a coiled coil.

This is an uncharacterized protein from Arabidopsis thaliana (Mouse-ear cress).